Consider the following 445-residue polypeptide: Tubulin beta chain (445 aa).

GTP-binding residues include Gln-11, Glu-69, Ser-138, Gly-142, Thr-143, Gly-144, Asn-204, and Asn-226. A Mg(2+)-binding site is contributed by Glu-69.

Belongs to the tubulin family. Dimer of alpha and beta chains. A typical microtubule is a hollow water-filled tube with an outer diameter of 25 nm and an inner diameter of 15 nM. Alpha-beta heterodimers associate head-to-tail to form protofilaments running lengthwise along the microtubule wall with the beta-tubulin subunit facing the microtubule plus end conferring a structural polarity. Microtubules usually have 13 protofilaments but different protofilament numbers can be found in some organisms and specialized cells. Mg(2+) serves as cofactor.

The protein resides in the cytoplasm. It is found in the cytoskeleton. Its function is as follows. Tubulin is the major constituent of microtubules, a cylinder consisting of laterally associated linear protofilaments composed of alpha- and beta-tubulin heterodimers. Microtubules grow by the addition of GTP-tubulin dimers to the microtubule end, where a stabilizing cap forms. Below the cap, tubulin dimers are in GDP-bound state, owing to GTPase activity of alpha-tubulin. The chain is Tubulin beta chain from Coprinopsis cinerea (strain Okayama-7 / 130 / ATCC MYA-4618 / FGSC 9003) (Inky cap fungus).